The following is a 266-amino-acid chain: Protein-ADP-ribose hydrolase (266 aa).

One can recognise a Macro domain in the interval 74–265 (TDLKDLKPIK…LYKEAFNRDA (192 aa)). Residues Asp-93, Ile-94, and Asn-107 each coordinate ADP-D-ribose. Cys-113, His-118, and Cys-120 together coordinate Zn(2+). 7 residues coordinate ADP-D-ribose: Cys-120, Ile-121, Asp-122, Ser-212, Thr-213, Gly-214, and Phe-216.

This sequence belongs to the MacroD-type family. Zn-Macro subfamily. Zn(2+) is required as a cofactor.

The catalysed reaction is 4-O-(ADP-D-ribosyl)-L-aspartyl-[protein] + H2O = L-aspartyl-[protein] + ADP-D-ribose + H(+). Functionally, ADP-ribosylhydrolase that specifically reverses the SirTM-mediated mono-ADP-ribosylation at an asparatate residue of GcvH-L, by releasing ADP-ribose from the target protein. May play a role in the regulation of the response to host-induced oxidative stress. In Staphylococcus aureus (strain MSSA476), this protein is Protein-ADP-ribose hydrolase.